We begin with the raw amino-acid sequence, 899 residues long: MPLQSLVKALWNVLHEEESEGYPDLTELIAEVESYQQRYPKQNPTNSQKIRHILDEIYEKTPFNNTRRRILWLAVLKTVIPLLILDRQAVGEWWDQIFFPFLNSPTQLKPVFSDLKSILFYILIFHDEDEWGGDLRRECAEETITRLVDLYVSKAIENLGDVESQEQRNQTIECLVNVLVHYGIQRPKELSSCFCHHFLNPPTRIPILSVMVEVIRRQGPRLYEIPQTGFYDLVLKCAEFDTSPILLSYALSFILMILSHICNSLDDSLYRLFCIYLRFSMIDPTSGFPSSTASGNWEVFHDFMSTYASTTTSQTDSSYNDVHDIVGSSQPDYLESLDYSQLFSILYALYPINFLEFLRDPKLYASKHNFQIRYSFNQELLSTKSDGLLGRHLAHSNFLKYTAETELTDKSRWTRLDSIAVVALCNSLNAVGIAESVMDPFGGKLPTTYEETSSATGLLAYPNESHDIASEPFSISWPQNPSISGSVHSATTFDKAQLSNTEDSYDNISHGTSYSEGVSSIHMVKGERGSNNLELTSESLSSTNDTIRRLQRDLLFLQNELRFEKFVRQQHLQNIGKLHREHILDMAVESERQKLLLTNKRYKAQIELLNSEIDKHRSESQAALNRRVKWENDFNNKIKALREEKKAWKSEESELKSSIESLISQLESIRNSQIDIAFSKNQLELKLQLYETKLKEYEQHLSCVNISKKQVSSSSDTSFGNTKMDSSMILSNSEAVSDEQERELIESEKHRMKLESENLHLQANIELLKKDLEAINVVYEAKIFDLEKRLSSEANAPELHNPVNLNYDAQLSKISEIKENYDELLTRYRELEGKFLESQAEVEELKNFQKPLVDTGSSIHSSPGLQQSKFIIRNDSLHPKVGPPRRQSTDTSRSTFRQY.

2 coiled-coil regions span residues 540–706 (LSST…CVNI) and 737–847 (SDEQ…ELKN). A disordered region spans residues 874–899 (NDSLHPKVGPPRRQSTDTSRSTFRQY). Positions 889–899 (TDTSRSTFRQY) are enriched in polar residues.

As to quaternary structure, interacts with tsc2.

It localises to the cytoplasm. In terms of biological role, together with tsc2, required for uptake of various amino acids from the environment and for proper conjugation. Involved in induction of gene expression of permeases and genes required for meiosis upon nitrogen starvation. May act as a GTPase-activating protein (GAP) for the small GTPase rhb1. This chain is Tuberous sclerosis 1 protein homolog (tsc1), found in Schizosaccharomyces pombe (strain 972 / ATCC 24843) (Fission yeast).